The chain runs to 305 residues: Glyceraldehyde-3-phosphate dehydrogenase 2, cytosolic (305 aa).

NAD(+)-binding residues include D3 and R50. D-glyceraldehyde 3-phosphate contacts are provided by residues 121 to 123 (SCT), T152, 181 to 182 (TG), and R204. The active-site Nucleophile is the C122. Residue N286 coordinates NAD(+).

Belongs to the glyceraldehyde-3-phosphate dehydrogenase family. Homotetramer.

It localises to the cytoplasm. It carries out the reaction D-glyceraldehyde 3-phosphate + phosphate + NAD(+) = (2R)-3-phospho-glyceroyl phosphate + NADH + H(+). The protein operates within carbohydrate degradation; glycolysis; pyruvate from D-glyceraldehyde 3-phosphate: step 1/5. Its function is as follows. Key enzyme in glycolysis that catalyzes the first step of the pathway by converting D-glyceraldehyde 3-phosphate (G3P) into 3-phospho-D-glyceroyl phosphate. Essential for the maintenance of cellular ATP levels and carbohydrate metabolism. The chain is Glyceraldehyde-3-phosphate dehydrogenase 2, cytosolic (GAPC) from Hordeum vulgare (Barley).